The following is a 392-amino-acid chain: Queuine tRNA-ribosyltransferase (392 aa).

D92 acts as the Proton acceptor in catalysis. Residues 92 to 96, D146, Q188, and G215 contribute to the substrate site; that span reads DSGGF. The interval 246–252 is RNA binding; that stretch reads GVGSPED. The active-site Nucleophile is D265. The tract at residues 270 to 274 is RNA binding; important for wobble base 34 recognition; that stretch reads TRLGR. Zn(2+) contacts are provided by C303, C305, C308, and H334.

Belongs to the queuine tRNA-ribosyltransferase family. As to quaternary structure, homodimer. Within each dimer, one monomer is responsible for RNA recognition and catalysis, while the other monomer binds to the replacement base PreQ1. The cofactor is Zn(2+).

The catalysed reaction is 7-aminomethyl-7-carbaguanine + guanosine(34) in tRNA = 7-aminomethyl-7-carbaguanosine(34) in tRNA + guanine. It participates in tRNA modification; tRNA-queuosine biosynthesis. Catalyzes the base-exchange of a guanine (G) residue with the queuine precursor 7-aminomethyl-7-deazaguanine (PreQ1) at position 34 (anticodon wobble position) in tRNAs with GU(N) anticodons (tRNA-Asp, -Asn, -His and -Tyr). Catalysis occurs through a double-displacement mechanism. The nucleophile active site attacks the C1' of nucleotide 34 to detach the guanine base from the RNA, forming a covalent enzyme-RNA intermediate. The proton acceptor active site deprotonates the incoming PreQ1, allowing a nucleophilic attack on the C1' of the ribose to form the product. After dissociation, two additional enzymatic reactions on the tRNA convert PreQ1 to queuine (Q), resulting in the hypermodified nucleoside queuosine (7-(((4,5-cis-dihydroxy-2-cyclopenten-1-yl)amino)methyl)-7-deazaguanosine). In Herpetosiphon aurantiacus (strain ATCC 23779 / DSM 785 / 114-95), this protein is Queuine tRNA-ribosyltransferase.